The sequence spans 395 residues: MAQLETRTEPMVVNFGPHHPSMHGVLRLVVTLDGENVIDCEPVIGYLHRGMEKIAENRTNVMYVPYVSRMDYAAGMFYEAIVVNAPERLANISVPKRASYIRVLMLELNRIANHLLWLGPFLADVGAQTPFFYIFREREMIYDLWEAATGQRLINNNFFRIGGVACDLPYGWLEKCIDFCDWFAPKIDEYEKLITNNPIFKKRIEGLGTIERDQAINWSLSGPMLRASGVSWDLRKVDNYECYDDFDWKIASEKEGDCYARYRVRVEEMRQSLKIIRQACEMIPGGPTENLEAKRMATDDKKSDIFGIDYQYVAKKVAPTFKIPNGELYTRLESGKGEIGVFIQGNNEVTPWRFKIRAADLNNLQILPHILKGAKIADIMAILGSIDVIMGSVDR.

The protein belongs to the complex I 49 kDa subunit family. In terms of assembly, NDH-1 can be composed of about 15 different subunits; different subcomplexes with different compositions have been identified which probably have different functions.

The protein resides in the cellular thylakoid membrane. It catalyses the reaction a plastoquinone + NADH + (n+1) H(+)(in) = a plastoquinol + NAD(+) + n H(+)(out). The catalysed reaction is a plastoquinone + NADPH + (n+1) H(+)(in) = a plastoquinol + NADP(+) + n H(+)(out). In terms of biological role, NDH-1 shuttles electrons from an unknown electron donor, via FMN and iron-sulfur (Fe-S) centers, to quinones in the respiratory and/or the photosynthetic chain. The immediate electron acceptor for the enzyme in this species is believed to be plastoquinone. Couples the redox reaction to proton translocation, and thus conserves the redox energy in a proton gradient. Cyanobacterial NDH-1 also plays a role in inorganic carbon-concentration. The sequence is that of NAD(P)H-quinone oxidoreductase subunit H from Prochlorococcus marinus (strain MIT 9515).